Here is an 860-residue protein sequence, read N- to C-terminus: Paladin (860 aa).

Residues 1-24 form a disordered region; sequence MGTTASAAPQATLHERLHSDSMTD. A lipid anchor (N-myristoyl glycine) is attached at G2. Positions 13 to 24 are enriched in basic and acidic residues; the sequence is LHERLHSDSMTD.

The protein belongs to the paladin family.

It localises to the cytoplasm. The protein resides in the cytosol. The polypeptide is Paladin (pald1) (Danio rerio (Zebrafish)).